We begin with the raw amino-acid sequence, 366 residues long: NAD(P)H-quinone oxidoreductase subunit 1, chloroplastic (366 aa).

The next 8 membrane-spanning stretches (helical) occupy residues 29-49, 97-117, 130-150, 166-186, 202-222, 254-274, 307-327, and 340-360; these read WITASILILVSGVVIGVLVIV, LLFSIGPAIVVIPVLLSYLVI, IGVFFWIAVSSIAPLGLFMAG, VAQAISYEIPLALCVLSISLL, FGFWGWNVWRQPIGFIAFLIA, FGLFYVASYLNLLVSSLFVTV, VIIGIIITLAKAYSFLFISIV, and LLNLGWKFLLPIALGNLLLTA.

It belongs to the complex I subunit 1 family. As to quaternary structure, NDH is composed of at least 16 different subunits, 5 of which are encoded in the nucleus.

The protein resides in the plastid. Its subcellular location is the chloroplast thylakoid membrane. It carries out the reaction a plastoquinone + NADH + (n+1) H(+)(in) = a plastoquinol + NAD(+) + n H(+)(out). It catalyses the reaction a plastoquinone + NADPH + (n+1) H(+)(in) = a plastoquinol + NADP(+) + n H(+)(out). In terms of biological role, NDH shuttles electrons from NAD(P)H:plastoquinone, via FMN and iron-sulfur (Fe-S) centers, to quinones in the photosynthetic chain and possibly in a chloroplast respiratory chain. The immediate electron acceptor for the enzyme in this species is believed to be plastoquinone. Couples the redox reaction to proton translocation, and thus conserves the redox energy in a proton gradient. The protein is NAD(P)H-quinone oxidoreductase subunit 1, chloroplastic of Anthoceros angustus (Hornwort).